Consider the following 151-residue polypeptide: UPF0208 membrane protein YfbV (151 aa).

The Cytoplasmic segment spans residues 1–45; that stretch reads MSTPDNRSVNFFSLFCRGQHYSKTWPLEKRLAPVFVENRVIKMTR. Residues 46–65 traverse the membrane as a helical segment; that stretch reads YAIRFMPPIAVFTLCWQIAL. Over 66–68 the chain is Periplasmic; it reads GGQ. A helical transmembrane segment spans residues 69–91; sequence LGPAVATALFALSLPMQGLWWLG. Residues 92–151 are Cytoplasmic-facing; the sequence is KRSVTPLPPAILNWFYEVRGKLQESGQVLAPVEGKPDYQALADTLKRAFKQLDKTFLDDL.

This sequence belongs to the UPF0208 family.

It localises to the cell inner membrane. The protein is UPF0208 membrane protein YfbV (yfbV) of Escherichia coli O6:H1 (strain CFT073 / ATCC 700928 / UPEC).